Here is a 156-residue protein sequence, read N- to C-terminus: ATP synthase subunit b (156 aa).

A helical transmembrane segment spans residues 11–31; it reads AIAFVLFVMFCMKFVWPPIMA.

This sequence belongs to the ATPase B chain family. As to quaternary structure, F-type ATPases have 2 components, F(1) - the catalytic core - and F(0) - the membrane proton channel. F(1) has five subunits: alpha(3), beta(3), gamma(1), delta(1), epsilon(1). F(0) has three main subunits: a(1), b(2) and c(10-14). The alpha and beta chains form an alternating ring which encloses part of the gamma chain. F(1) is attached to F(0) by a central stalk formed by the gamma and epsilon chains, while a peripheral stalk is formed by the delta and b chains.

The protein localises to the cell inner membrane. Its function is as follows. F(1)F(0) ATP synthase produces ATP from ADP in the presence of a proton or sodium gradient. F-type ATPases consist of two structural domains, F(1) containing the extramembraneous catalytic core and F(0) containing the membrane proton channel, linked together by a central stalk and a peripheral stalk. During catalysis, ATP synthesis in the catalytic domain of F(1) is coupled via a rotary mechanism of the central stalk subunits to proton translocation. In terms of biological role, component of the F(0) channel, it forms part of the peripheral stalk, linking F(1) to F(0). This is ATP synthase subunit b from Photorhabdus laumondii subsp. laumondii (strain DSM 15139 / CIP 105565 / TT01) (Photorhabdus luminescens subsp. laumondii).